The chain runs to 201 residues: Potassium-transporting ATPase KdpC subunit (201 aa).

The chain crosses the membrane as a helical span at residues proline 7–methionine 27.

Belongs to the KdpC family. The system is composed of three essential subunits: KdpA, KdpB and KdpC.

It localises to the cell inner membrane. In terms of biological role, part of the high-affinity ATP-driven potassium transport (or Kdp) system, which catalyzes the hydrolysis of ATP coupled with the electrogenic transport of potassium into the cytoplasm. This subunit acts as a catalytic chaperone that increases the ATP-binding affinity of the ATP-hydrolyzing subunit KdpB by the formation of a transient KdpB/KdpC/ATP ternary complex. The protein is Potassium-transporting ATPase KdpC subunit of Xanthobacter autotrophicus (strain ATCC BAA-1158 / Py2).